A 474-amino-acid polypeptide reads, in one-letter code: tRNA-2-methylthio-N(6)-dimethylallyladenosine synthase (474 aa).

Residues 3–120 (KKLHIKTWGC…LPEMINSVRG (118 aa)) form the MTTase N-terminal domain. 6 residues coordinate [4Fe-4S] cluster: C12, C49, C83, C157, C161, and C164. The region spanning 143-375 (RAEGPTAFVS…QERINQQAMA (233 aa)) is the Radical SAM core domain. One can recognise a TRAM domain in the interval 378 to 441 (RRMLGSTQRI…PNSLRGKVVR (64 aa)).

This sequence belongs to the methylthiotransferase family. MiaB subfamily. As to quaternary structure, monomer. [4Fe-4S] cluster serves as cofactor.

It localises to the cytoplasm. The catalysed reaction is N(6)-dimethylallyladenosine(37) in tRNA + (sulfur carrier)-SH + AH2 + 2 S-adenosyl-L-methionine = 2-methylsulfanyl-N(6)-dimethylallyladenosine(37) in tRNA + (sulfur carrier)-H + 5'-deoxyadenosine + L-methionine + A + S-adenosyl-L-homocysteine + 2 H(+). In terms of biological role, catalyzes the methylthiolation of N6-(dimethylallyl)adenosine (i(6)A), leading to the formation of 2-methylthio-N6-(dimethylallyl)adenosine (ms(2)i(6)A) at position 37 in tRNAs that read codons beginning with uridine. This Salmonella arizonae (strain ATCC BAA-731 / CDC346-86 / RSK2980) protein is tRNA-2-methylthio-N(6)-dimethylallyladenosine synthase.